A 191-amino-acid chain; its full sequence is ECF RNA polymerase sigma-E factor (191 aa).

The interval 1–153 is binds RNAP core; that stretch reads MSEQLTDQVL…MAITLRELDG (153 aa). Residues 25–92 are sigma-70 factor domain-2; that stretch reads LVVRYQHKVA…KNYLVAQGRR (68 aa). The short motif at 48-61 is the Polymerase core binding element; that stretch reads DVVQEAFIKAYRAL. The tract at residues 129–180 is sigma-70 factor domain-4; sequence QIVFRTIESLPEDLRMAITLRELDGLSYEEIAAIMDCPVGTVRSRIFRAREA. The segment at residues 156-175 is a DNA-binding region (H-T-H motif); that stretch reads YEEIAAIMDCPVGTVRSRIF.

The protein belongs to the sigma-70 factor family. ECF subfamily. Interacts transiently with the RNAP catalytic core formed by RpoA, RpoB, RpoC and RpoZ (2 alpha, 1 beta, 1 beta' and 1 omega subunit) to form the RNAP holoenzyme that can initiate transcription. Interacts 1:1 with anti-sigma-E factor RseA which prevents binding to RNAP catalytic core.

It localises to the cytoplasm. Its activity is regulated as follows. ECF sigma-E is held in an inactive form by its cognate anti-sigma factor (RseA) until released by regulated intramembrane proteolysis (RIP). RIP occurs when an extracytoplasmic signal (periplasmic stress and excess LPS) triggers a concerted proteolytic cascade to transmit information and elicit cellular responses. The anti-sigma factor RseA is an inner membrane protein, binding sigma-E in the cytoplasm and RseB in the periplasm. RseA is first cut extracytoplasmically (site-1 protease, S1P, by DegS), then within the membrane itself (site-2 protease, S2P, by RseP), while cytoplasmic proteases (predominantly ClpX-ClpP) finish degrading the regulatory protein, liberating sigma-E. Degradation of RseA requires 2 signals to activate DegS; an outer membrane protein (OMP) signal activates DegS, while an LPS signal causes release of RseB from RseA, freeing RseA to be cleaved. Its function is as follows. Sigma factors are initiation factors that promote the attachment of RNA polymerase (RNAP) to specific initiation sites and are then released. Extracytoplasmic function (ECF) sigma-E controls the envelope stress response, responding to periplasmic protein stress, increased levels of periplasmic lipopolysaccharide (LPS) as well as heat shock and oxidative stress; it controls protein processing in the extracytoplasmic compartment. The polypeptide is ECF RNA polymerase sigma-E factor (rpoE) (Escherichia coli O157:H7).